The chain runs to 286 residues: 5'-3' exonuclease (286 aa).

The 5'-3' exonuclease domain occupies 172 to 270 (IKPKEFIDFL…IKLKDIILKK (99 aa)).

In terms of biological role, 5'-3' exonuclease acting preferentially on double-stranded DNA. This is 5'-3' exonuclease from Buchnera aphidicola subsp. Acyrthosiphon pisum (strain APS) (Acyrthosiphon pisum symbiotic bacterium).